Here is a 542-residue protein sequence, read N- to C-terminus: CTP synthase (542 aa).

Residues 1–265 (MARYIFITGG…DSEVLCAFGI (265 aa)) are amidoligase domain. A CTP-binding site is contributed by serine 13. Residue serine 13 coordinates UTP. 14-19 (SLGKGI) is an ATP binding site. Position 54 (tyrosine 54) interacts with L-glutamine. Aspartate 71 lines the ATP pocket. Residues aspartate 71 and glutamate 139 each contribute to the Mg(2+) site. Residues 146-148 (DIE), 186-191 (KTKPTQ), and lysine 222 contribute to the CTP site. UTP contacts are provided by residues 186–191 (KTKPTQ) and lysine 222. The region spanning 291-541 (TIAVVGKYTG…IEATVEQSRL (251 aa)) is the Glutamine amidotransferase type-1 domain. An L-glutamine-binding site is contributed by alanine 353. Catalysis depends on cysteine 380, which acts as the Nucleophile; for glutamine hydrolysis. L-glutamine contacts are provided by residues 381 to 384 (FGMQ), glutamate 404, and arginine 469. Active-site residues include histidine 514 and glutamate 516.

The protein belongs to the CTP synthase family. Homotetramer.

The enzyme catalyses UTP + L-glutamine + ATP + H2O = CTP + L-glutamate + ADP + phosphate + 2 H(+). The catalysed reaction is L-glutamine + H2O = L-glutamate + NH4(+). It catalyses the reaction UTP + NH4(+) + ATP = CTP + ADP + phosphate + 2 H(+). It participates in pyrimidine metabolism; CTP biosynthesis via de novo pathway; CTP from UDP: step 2/2. Its activity is regulated as follows. Allosterically activated by GTP, when glutamine is the substrate; GTP has no effect on the reaction when ammonia is the substrate. The allosteric effector GTP functions by stabilizing the protein conformation that binds the tetrahedral intermediate(s) formed during glutamine hydrolysis. Inhibited by the product CTP, via allosteric rather than competitive inhibition. Catalyzes the ATP-dependent amination of UTP to CTP with either L-glutamine or ammonia as the source of nitrogen. Regulates intracellular CTP levels through interactions with the four ribonucleotide triphosphates. This Bartonella quintana (strain Toulouse) (Rochalimaea quintana) protein is CTP synthase.